We begin with the raw amino-acid sequence, 349 residues long: tRNA pseudouridine synthase D (349 aa).

Substrate is bound at residue Phe27. Residue Asp80 is the Nucleophile of the active site. Asn129 is a substrate binding site. The TRUD domain maps to Gly155 to Leu303. Phe329 serves as a coordination point for substrate.

The protein belongs to the pseudouridine synthase TruD family.

The catalysed reaction is uridine(13) in tRNA = pseudouridine(13) in tRNA. In terms of biological role, responsible for synthesis of pseudouridine from uracil-13 in transfer RNAs. In Shigella boydii serotype 18 (strain CDC 3083-94 / BS512), this protein is tRNA pseudouridine synthase D.